An 817-amino-acid polypeptide reads, in one-letter code: MAVTNEELKTAHKIVRRVSNIEAFDKSGVVFKGYQIWTNISPTIEEDPNVMFVKCVVQHGSNQDKLNVVQIDPPGSGTPYEIDVKSAWNCNSQVDPMSFGDIGLLNHTNTPCVLDFLKHRYLKNQIYTTACPLIVAINPYKDLGNTTDEWIRKYRDASDHTRLPPHIFSCAREALSNLHGVNKSQTIIVSGESGAGKTEATKQIMKYFASSKNGNMDLYIQTAIMAANPVLEAFGNAKTIRNNNSSRFGRFMQLAISHEGGIRNGSVVAFLLEKSRIITQDDNERSYHIFYQFLKGADSNMKSKFGLKGIKDYKLLNPNSPDVDGIDDVKDFQEVITSLKNMQLNDEQIEVIFSIIAGILTLGNVRIVEKTEAGLSDAAGIHNDDMETFKKACELMFLDPELVKRELLIKVTIAGGNRIEGRWNKNDAEVLKLSLCKAMYEKLFLWIIKNLNSRIEPEGGFKAFMGMLDIFGFEVFKNNSLEQLFINITNEMLQKNFVDIVFERESKLYRDEGISTAELNYTSNKEVISVLCERGKSVLSYLEDQCLAPGGSDEKFVNACVVNLKSNEKFIPAKVASNKNFIIQHTIGPIQYCSDNFLLKNKDVLRGELVEIILGSGNKVVSGLFEGQVIEKGKMAKGSLIGSQFLNQLTSLMTLINSTEPHFIRCIKPNENKKPLEWCEPKILIQLHALSILEALVLRQLGYSYRRTFDEFLYQFKFVDINTSENSSLDSREKCNKILKLSGLSDDMLKIGKTMVFLKQDGAKMLSKIQREKLVEWENCVSVIEAAIMKYKHKQNVENNVSSLMRVQAHIRKRMVA.

At Ser19 the chain carries Phosphoserine. Positions 97–771 constitute a Myosin motor domain; sequence MSFGDIGLLN…GAKMLSKIQR (675 aa). 191 to 198 contributes to the ATP binding site; it reads GESGAGKT. Residues 661 to 671 are actin-binding; that stretch reads PHFIRCIKPNE. The tail stretch occupies residues 773–817; the sequence is KLVEWENCVSVIEAAIMKYKHKQNVENNVSSLMRVQAHIRKRMVA.

This sequence belongs to the TRAFAC class myosin-kinesin ATPase superfamily. Myosin family. As to quaternary structure, interacts with ACT1.

The protein localises to the cell membrane. In terms of biological role, myosins are actin-based motor molecules with ATPase activity. Unconventional myosins serve in intracellular movements. Their highly divergent tails are presumed to bind to membranous compartments, which would be moved relative to actin filaments. The chain is Myosin-A from Plasmodium yoelii yoelii.